The primary structure comprises 359 residues: Fructose-bisphosphate aldolase (359 aa).

Thr11 is subject to Phosphothreonine. Lys27 is covalently cross-linked (Glycyl lysine isopeptide (Lys-Gly) (interchain with G-Cter in ubiquitin)). Phosphoserine occurs at positions 56 and 63. Ser63 lines the D-glyceraldehyde 3-phosphate pocket. Lys73 participates in a covalent cross-link: Glycyl lysine isopeptide (Lys-Gly) (interchain with G-Cter in ubiquitin). Phosphoserine is present on residues Ser76 and Ser83. A Glycyl lysine isopeptide (Lys-Gly) (interchain with G-Cter in ubiquitin) cross-link involves residue Lys85. A Phosphoserine modification is found at Ser96. The active-site Proton donor is Asp110. Residues His111 and Asp145 each contribute to the Zn(2+) site. Ser147 carries the phosphoserine modification. Thr150 bears the Phosphothreonine mark. Glu175 serves as a coordination point for Zn(2+). Thr179 is modified (phosphothreonine). His227 serves as a coordination point for Zn(2+). Gly228 is a dihydroxyacetone phosphate binding site. His265 provides a ligand contact to Zn(2+). Residues 266 to 268 and 287 to 290 contribute to the dihydroxyacetone phosphate site; these read GGS and NLDT. Ser268 is modified (phosphoserine). At Thr290 the chain carries Phosphothreonine. Residue Lys308 forms a Glycyl lysine isopeptide (Lys-Gly) (interchain with G-Cter in ubiquitin) linkage. Tyr310 carries the post-translational modification Phosphotyrosine. A Phosphoserine modification is found at Ser313.

This sequence belongs to the class II fructose-bisphosphate aldolase family. Homodimer. The cofactor is Zn(2+).

The enzyme catalyses beta-D-fructose 1,6-bisphosphate = D-glyceraldehyde 3-phosphate + dihydroxyacetone phosphate. The protein operates within carbohydrate degradation; glycolysis; D-glyceraldehyde 3-phosphate and glycerone phosphate from D-glucose: step 4/4. Its function is as follows. Catalyzes the aldol condensation of dihydroxyacetone phosphate (DHAP or glycerone-phosphate) with glyceraldehyde 3-phosphate (G3P) to form fructose 1,6-bisphosphate (FBP) in gluconeogenesis and the reverse reaction in glycolysis. In Saccharomyces cerevisiae (strain ATCC 204508 / S288c) (Baker's yeast), this protein is Fructose-bisphosphate aldolase (FBA1).